A 342-amino-acid polypeptide reads, in one-letter code: D-erythrose-4-phosphate dehydrogenase (342 aa).

Residue 11-12 coordinates NAD(+); that stretch reads RI. Substrate is bound by residues 153-155, R199, 212-213, and R235; these read SCT and TK. C154 functions as the Nucleophile in the catalytic mechanism. N317 serves as a coordination point for NAD(+).

It belongs to the glyceraldehyde-3-phosphate dehydrogenase family. Epd subfamily. In terms of assembly, homotetramer.

It is found in the cytoplasm. It carries out the reaction D-erythrose 4-phosphate + NAD(+) + H2O = 4-phospho-D-erythronate + NADH + 2 H(+). It participates in cofactor biosynthesis; pyridoxine 5'-phosphate biosynthesis; pyridoxine 5'-phosphate from D-erythrose 4-phosphate: step 1/5. Its function is as follows. Catalyzes the NAD-dependent conversion of D-erythrose 4-phosphate to 4-phosphoerythronate. This Shewanella denitrificans (strain OS217 / ATCC BAA-1090 / DSM 15013) protein is D-erythrose-4-phosphate dehydrogenase.